The following is a 325-amino-acid chain: GTP 3',8-cyclase (325 aa).

The 220-residue stretch at 10–229 (GYGRRINYLR…PSLEKIKSED (220 aa)) folds into the Radical SAM core domain. Arg19 is a GTP binding site. Positions 26 and 30 each coordinate [4Fe-4S] cluster. Position 32 (Tyr32) interacts with S-adenosyl-L-methionine. Cys33 serves as a coordination point for [4Fe-4S] cluster. Arg69 provides a ligand contact to GTP. Gly73 contributes to the S-adenosyl-L-methionine binding site. Residue Thr100 participates in GTP binding. Ser124 contributes to the S-adenosyl-L-methionine binding site. Lys161 contacts GTP. Residue Met195 coordinates S-adenosyl-L-methionine. [4Fe-4S] cluster-binding residues include Cys257 and Cys260. 262–264 (RLR) provides a ligand contact to GTP. Cys274 is a binding site for [4Fe-4S] cluster.

The protein belongs to the radical SAM superfamily. MoaA family. Monomer and homodimer. The cofactor is [4Fe-4S] cluster.

It catalyses the reaction GTP + AH2 + S-adenosyl-L-methionine = (8S)-3',8-cyclo-7,8-dihydroguanosine 5'-triphosphate + 5'-deoxyadenosine + L-methionine + A + H(+). Its pathway is cofactor biosynthesis; molybdopterin biosynthesis. Catalyzes the cyclization of GTP to (8S)-3',8-cyclo-7,8-dihydroguanosine 5'-triphosphate. This chain is GTP 3',8-cyclase, found in Peptoclostridium acidaminophilum (Eubacterium acidaminophilum).